Reading from the N-terminus, the 76-residue chain is U-scoloptoxin(13)-Sa1a (76 aa).

The signal sequence occupies residues 1 to 22; that stretch reads MAYIFALIFAFVVCINTDVIQA.

Belongs to the scoloptoxin-13 family. In terms of processing, contains 4 disulfide bonds. Expressed by the venom gland.

The protein resides in the secreted. This chain is U-scoloptoxin(13)-Sa1a, found in Scolopendra alternans (Florida Keys giant centipede).